Here is a 276-residue protein sequence, read N- to C-terminus: 2-dehydro-3-deoxyphosphooctonate aldolase (276 aa).

Belongs to the KdsA family.

Its subcellular location is the cytoplasm. The enzyme catalyses D-arabinose 5-phosphate + phosphoenolpyruvate + H2O = 3-deoxy-alpha-D-manno-2-octulosonate-8-phosphate + phosphate. It participates in carbohydrate biosynthesis; 3-deoxy-D-manno-octulosonate biosynthesis; 3-deoxy-D-manno-octulosonate from D-ribulose 5-phosphate: step 2/3. It functions in the pathway bacterial outer membrane biogenesis; lipopolysaccharide biosynthesis. The polypeptide is 2-dehydro-3-deoxyphosphooctonate aldolase (Helicobacter acinonychis (strain Sheeba)).